The chain runs to 224 residues: Biosynthetic peptidoglycan transglycosylase (224 aa).

Residues 9–29 form a helical membrane-spanning segment; sequence VLILVSFVLLIQLWIFCSLAW.

The protein belongs to the glycosyltransferase 51 family.

Its subcellular location is the cell inner membrane. The catalysed reaction is [GlcNAc-(1-&gt;4)-Mur2Ac(oyl-L-Ala-gamma-D-Glu-L-Lys-D-Ala-D-Ala)](n)-di-trans,octa-cis-undecaprenyl diphosphate + beta-D-GlcNAc-(1-&gt;4)-Mur2Ac(oyl-L-Ala-gamma-D-Glu-L-Lys-D-Ala-D-Ala)-di-trans,octa-cis-undecaprenyl diphosphate = [GlcNAc-(1-&gt;4)-Mur2Ac(oyl-L-Ala-gamma-D-Glu-L-Lys-D-Ala-D-Ala)](n+1)-di-trans,octa-cis-undecaprenyl diphosphate + di-trans,octa-cis-undecaprenyl diphosphate + H(+). The protein operates within cell wall biogenesis; peptidoglycan biosynthesis. Peptidoglycan polymerase that catalyzes glycan chain elongation from lipid-linked precursors. This chain is Biosynthetic peptidoglycan transglycosylase, found in Acinetobacter baylyi (strain ATCC 33305 / BD413 / ADP1).